Consider the following 63-residue polypeptide: uncharacterized protein (63 aa).

Basic and acidic residues predominate over residues 1 to 17; the sequence is MRYTDSRKLTPETDANH. The tract at residues 1 to 32 is disordered; that stretch reads MRYTDSRKLTPETDANHKTASPQPIRRISSQT. Over residues 18–32 the composition is skewed to polar residues; it reads KTASPQPIRRISSQT.

To Y.enterocolitica HemP.

This is an uncharacterized protein from Escherichia coli (strain K12).